An 86-amino-acid chain; its full sequence is High affinity immunoglobulin epsilon receptor subunit gamma (86 aa).

A signal peptide spans 1 to 18; sequence MIPAVVLLLLLLVEQAAA. At 19-23 the chain is on the extracellular side; the sequence is LGEPQ. The helical transmembrane segment at 24 to 44 threads the bilayer; the sequence is LCYILDAILFLYGIVLTLLYC. Over 45–86 the chain is Cytoplasmic; that stretch reads RLKLQVRKAAIDSYEKSDGVYTGLSTRNQETYETLKHEKPPQ. Positions 54-82 constitute an ITAM domain; that stretch reads AIDSYEKSDGVYTGLSTRNQETYETLKHE. The residue at position 65 (Tyr-65) is a Phosphotyrosine. The residue at position 69 (Ser-69) is a Phosphoserine. Tyr-76 is subject to Phosphotyrosine. At Thr-78 the chain carries Phosphothreonine.

This sequence belongs to the CD3Z/FCER1G family. IgE Fc receptor is a tetramer of an alpha chain, a beta chain, and two disulfide linked gamma chains. Associates with FCGR1A; forms a functional signaling complex. The signaling subunit of immunoglobulin gamma (IgG) Fc receptor complex. As a homodimer or a heterodimer of CD247 and FCER1G, associates with the ligand binding subunit FCGR3A to form a functional receptor complex. Associates with CLEC6A. Interacts with CLEC4E. Interacts (via ITAM domain) with SYK (via SH2 domains); activates SYK, enabling integrin-mediated activation of neutrophils and macrophages. Interacts with common beta chain of interleukin 3 receptor CSF2RB and recruits SYK in response to IL3 stimulation; this interaction is direct. Interacts with CD300LH; the interaction may be indirect. Interacts with CD300LD. Interacts with TARM1.

It localises to the cell membrane. Its function is as follows. Adapter protein containing an immunoreceptor tyrosine-based activation motif (ITAM) that transduces activation signals from various immunoreceptors. As a component of the high-affinity immunoglobulin E (IgE) receptor, mediates allergic inflammatory signaling in mast cells. As a constitutive component of interleukin-3 receptor complex, selectively mediates interleukin 4/IL4 production b basophils priming T-cells toward effector T-helper 2 subset. Associates with pattern recognition receptors CLEC4D and CLEC4E to form a functional signaling complex in myeloid cells. Binding of mycobacterial trehalose 6,6'-dimycolate (TDM) to this receptor complex leads to phosphorylation of ITAM, triggering activation of SYK, CARD9 and NF-kappa-B, consequently driving maturation of antigen-presenting cells and shaping antigen-specific priming of T-cells toward effector T-helper 1 and T-helper 17 cell subtypes. May function cooperatively with other activating receptors. Functionally linked to integrin beta-2/ITGB2-mediated neutrophil activation. Also involved in integrin alpha-2/ITGA2-mediated platelet activation. The protein is High affinity immunoglobulin epsilon receptor subunit gamma (FCER1G) of Sus scrofa (Pig).